The chain runs to 122 residues: Small ribosomal subunit protein uS13 (122 aa).

A disordered region spans residues 95–122; that stretch reads SLPCRGQRTSTNARTRKGPKRAAVKKKK. Over residues 108 to 122 the composition is skewed to basic residues; that stretch reads RTRKGPKRAAVKKKK.

Belongs to the universal ribosomal protein uS13 family. Part of the 30S ribosomal subunit. Forms a loose heterodimer with protein S19. Forms two bridges to the 50S subunit in the 70S ribosome.

Its function is as follows. Located at the top of the head of the 30S subunit, it contacts several helices of the 16S rRNA. In the 70S ribosome it contacts the 23S rRNA (bridge B1a) and protein L5 of the 50S subunit (bridge B1b), connecting the 2 subunits; these bridges are implicated in subunit movement. Contacts the tRNAs in the A and P-sites. This Desulforapulum autotrophicum (strain ATCC 43914 / DSM 3382 / VKM B-1955 / HRM2) (Desulfobacterium autotrophicum) protein is Small ribosomal subunit protein uS13.